The chain runs to 264 residues: Thymidylate synthase (264 aa).

DUMP is bound by residues arginine 21 and arginine 126–arginine 127. Cysteine 146 acts as the Nucleophile in catalysis. DUMP-binding positions include arginine 166–aspartate 169, asparagine 177, and histidine 207–tyrosine 209. Aspartate 169 is a binding site for (6R)-5,10-methylene-5,6,7,8-tetrahydrofolate. Position 263 (alanine 263) interacts with (6R)-5,10-methylene-5,6,7,8-tetrahydrofolate.

It belongs to the thymidylate synthase family. Bacterial-type ThyA subfamily. Homodimer.

It is found in the cytoplasm. It catalyses the reaction dUMP + (6R)-5,10-methylene-5,6,7,8-tetrahydrofolate = 7,8-dihydrofolate + dTMP. It participates in pyrimidine metabolism; dTTP biosynthesis. Its function is as follows. Catalyzes the reductive methylation of 2'-deoxyuridine-5'-monophosphate (dUMP) to 2'-deoxythymidine-5'-monophosphate (dTMP) while utilizing 5,10-methylenetetrahydrofolate (mTHF) as the methyl donor and reductant in the reaction, yielding dihydrofolate (DHF) as a by-product. This enzymatic reaction provides an intracellular de novo source of dTMP, an essential precursor for DNA biosynthesis. The protein is Thymidylate synthase of Afipia carboxidovorans (strain ATCC 49405 / DSM 1227 / KCTC 32145 / OM5) (Oligotropha carboxidovorans).